The sequence spans 158 residues: Ribonuclease H (158 aa).

The region spanning 1–142 is the RNase H type-1 domain; the sequence is MRKQVEIFTD…CDELARAAAM (142 aa). Mg(2+)-binding residues include Asp-10, Glu-48, Asp-70, and Asp-134.

This sequence belongs to the RNase H family. As to quaternary structure, monomer. Requires Mg(2+) as cofactor.

It is found in the cytoplasm. The enzyme catalyses Endonucleolytic cleavage to 5'-phosphomonoester.. Endonuclease that specifically degrades the RNA of RNA-DNA hybrids. The chain is Ribonuclease H from Cronobacter sakazakii (strain ATCC BAA-894) (Enterobacter sakazakii).